Consider the following 362-residue polypeptide: S-adenosylmethionine decarboxylase proenzyme (362 aa).

Active-site residues include Glu-11 and Glu-14. The Schiff-base intermediate with substrate; via pyruvic acid role is filled by Ser-71. At Ser-71 the chain carries Pyruvic acid (Ser); by autocatalysis. Cys-85 acts as the Proton donor; for catalytic activity in catalysis. Active-site proton acceptor; for processing activity residues include Ser-234 and His-247.

The protein belongs to the eukaryotic AdoMetDC family. Requires pyruvate as cofactor. Post-translationally, is synthesized initially as an inactive proenzyme. Formation of the active enzyme involves a self-maturation process in which the active site pyruvoyl group is generated from an internal serine residue via an autocatalytic post-translational modification. Two non-identical subunits are generated from the proenzyme in this reaction, and the pyruvate is formed at the N-terminus of the alpha chain, which is derived from the carboxyl end of the proenzyme. The post-translation cleavage follows an unusual pathway, termed non-hydrolytic serinolysis, in which the side chain hydroxyl group of the serine supplies its oxygen atom to form the C-terminus of the beta chain, while the remainder of the serine residue undergoes an oxidative deamination to produce ammonia and the pyruvoyl group blocking the N-terminus of the alpha chain.

The catalysed reaction is S-adenosyl-L-methionine + H(+) = S-adenosyl 3-(methylsulfanyl)propylamine + CO2. It functions in the pathway amine and polyamine biosynthesis; S-adenosylmethioninamine biosynthesis; S-adenosylmethioninamine from S-adenosyl-L-methionine: step 1/1. The sequence is that of S-adenosylmethionine decarboxylase proenzyme (SAMDC) from Ipomoea nil (Japanese morning glory).